Reading from the N-terminus, the 473-residue chain is Ribulose bisphosphate carboxylase large chain (473 aa).

The propeptide occupies Met-1 to Ser-2. Pro-3 carries the post-translational modification N-acetylproline. Lys-14 is modified (N6,N6,N6-trimethyllysine). Substrate-binding residues include Asn-123 and Thr-173. The active-site Proton acceptor is Lys-175. Residue Lys-177 coordinates substrate. Mg(2+) contacts are provided by Lys-201, Asp-203, and Glu-204. Position 201 is an N6-carboxylysine (Lys-201). The Proton acceptor role is filled by His-294. Arg-295, His-327, and Ser-379 together coordinate substrate.

Belongs to the RuBisCO large chain family. Type I subfamily. In terms of assembly, heterohexadecamer of 8 large chains and 8 small chains; disulfide-linked. The disulfide link is formed within the large subunit homodimers. Mg(2+) serves as cofactor. In terms of processing, the disulfide bond which can form in the large chain dimeric partners within the hexadecamer appears to be associated with oxidative stress and protein turnover.

The protein localises to the plastid. The protein resides in the chloroplast. The catalysed reaction is 2 (2R)-3-phosphoglycerate + 2 H(+) = D-ribulose 1,5-bisphosphate + CO2 + H2O. The enzyme catalyses D-ribulose 1,5-bisphosphate + O2 = 2-phosphoglycolate + (2R)-3-phosphoglycerate + 2 H(+). In terms of biological role, ruBisCO catalyzes two reactions: the carboxylation of D-ribulose 1,5-bisphosphate, the primary event in carbon dioxide fixation, as well as the oxidative fragmentation of the pentose substrate in the photorespiration process. Both reactions occur simultaneously and in competition at the same active site. This is Ribulose bisphosphate carboxylase large chain from Monarda didyma (Scarlet bee-balm).